The chain runs to 137 residues: Small ribosomal subunit protein uS12 (137 aa).

The segment at 1 to 57 (MPTINQLVRKPRKSKVKKSKSPALNVGYNSRKKVQTNVSSPQKRGVATRVGTMTPKK) is disordered. The span at 9–20 (RKPRKSKVKKSK) shows a compositional bias: basic residues. D102 is modified (3-methylthioaspartic acid).

Belongs to the universal ribosomal protein uS12 family. As to quaternary structure, part of the 30S ribosomal subunit. Contacts proteins S8 and S17. May interact with IF1 in the 30S initiation complex.

Its function is as follows. With S4 and S5 plays an important role in translational accuracy. Interacts with and stabilizes bases of the 16S rRNA that are involved in tRNA selection in the A site and with the mRNA backbone. Located at the interface of the 30S and 50S subunits, it traverses the body of the 30S subunit contacting proteins on the other side and probably holding the rRNA structure together. The combined cluster of proteins S8, S12 and S17 appears to hold together the shoulder and platform of the 30S subunit. The protein is Small ribosomal subunit protein uS12 of Streptococcus suis (strain 05ZYH33).